The chain runs to 154 residues: MKLLVLWVFAMMATVAMSRRWTFVRYHYINKAYEVTMKIQIISGFDRQLTAWLRVHGRRLTNNQKKTLFFVNRRYMQTHWQNYMLWVKRKIKALGRPAAVGDYTRLGAEIGRRVDMVFFYNFLSGRKMIPPYSAYMAKLNALRPADVPVKNHGK.

The signal sequence occupies residues 1–18 (MKLLVLWVFAMMATVAMS).

In terms of assembly, monomer. Homodimer. Molecules associate into dimers and then rapidly dissociate again. Interacts (as a monomer) with the egg vitelline layer protein VERL (via VERL repeats); each VERL chain can bind multiple copies of lysin. Sperm.

It is found in the cytoplasmic vesicle. The protein resides in the secretory vesicle. The protein localises to the acrosome lumen. Its function is as follows. Creates a 3 um hole in the egg vitelline layer through which the sperm passes. Does not have enzyme activity. Species-specific interaction between the sperm protein lysin and the egg protein VERL exposes a basic surface on lysin that may dissociate the egg vitelline layer via electrostatic repulsion. Plays a role in ensuring species-specific fertilization. This chain is Egg-lysin, found in Haliotis fulgens (Green abalone).